Consider the following 741-residue polypeptide: T-box transcription factor TBX3 (741 aa).

The segment at residues 107–220 is a DNA-binding region (T-box; first part); that stretch reads LEAKELWDQF…NNISDKHGFT (114 aa). A DNA-binding region (T-box; second part) is located at residues 241–305; it reads ILNSMHKYQP…NNPFAKGFRD (65 aa). S369 is subject to Phosphoserine. The interval 369–469 is disordered; the sequence is SEAESDAEAE…EGPVATKVDE (101 aa). 2 stretches are compositionally biased toward basic and acidic residues: residues 377–386 and 420–437; these read AESKEEHGPE and SRAR…DSRH. Residues S432, S438, S456, S705, S736, S738, and S740 each carry the phosphoserine modification. Polar residues predominate over residues 438 to 447; it reads SPATISSSTR.

In terms of assembly, interacts with PML. As to expression, in adults, highest levels in lung. Also found in brain, heart, kidney, liver and ovary.

It localises to the nucleus. Functionally, transcriptional repressor involved in developmental processes. Binds to the palindromic T site 5'-TTCACACCTAGGTGTGAA-3' DNA sequence, or a half-site, which are present in the regulatory region of several genes. Probably plays a role in limb pattern formation. Required for mammary placode induction, and maintenance of the mammary buds during development. Involved in branching morphogenesis in both developing lungs and adult mammary glands, via negative modulation of target genes; acting redundantly with TBX2. Required, together with TBX2, to maintain cell proliferation in the embryonic lung mesenchyme; perhaps acting downstream of SHH, BMP and TGFbeta signaling. Involved in modulating early inner ear development, acting independently of, and also redundantly with, TBX2 in different subregions of the developing ear. Acts as a negative regulator of PML function in cellular senescence. The protein is T-box transcription factor TBX3 (Tbx3) of Mus musculus (Mouse).